The primary structure comprises 648 residues: MLIGKRISGRYQILRVIGGGGMANVYLAEDIILDREVAIKILRFDYANDNEFIRRFRREAQSASSLDHPNIVSIYDLGEEDDIYYIVMEYVEGMTLKEYITANGPLHPKEALNIMEQIVSAIAHAHQNQIVHRDIKPHNILIDHMGNIKVTDFGIATALSSTTITHTNSVLGSVHYLSPEQARGGLATKKSDIYALGIVLFELLTGRIPFDGESAVSIALKHLQAETPSAKRWNPSVPQSVENIILKATAKDPFHRYETAEDMEADIKTAFDADRLNEKRFTIQEDEEMTKAIPIIKDEELAKAAGEKEAEVTTAQENKTKKNGKRKKWPWVLLTICLVFITAGILAVTVFPSLFMPKDVKIPDVSGMEYEKAAGLLEKEGLQVDSEVLEISDEKIEEGLMVKTDPKADTTVKEGATVTLYKSTGKAKTEIGDVTGQTVDQAKKALKDQGFNHVTVNEVNDEKNAGTVIDQNPSAGTELVPSEDQVKLTVSIGPEDITLRDLKTYSKEAASGYLEDNGLKLVEKEAYSDDVPEGQVVKQKPAAGTAVKPGNEVEVTFSLGPEKKPAKTVKEKVKIPYEPENEGDELQVQIAVDDADHSISDTYEEFKIKEPTERTIELKIEPGQKGYYQVMVNNKVVSYKTIEYPKDE.

The Cytoplasmic portion of the chain corresponds to 1–330 (MLIGKRISGR…KKNGKRKKWP (330 aa)). Residues 11–271 (YQILRVIGGG…DMEADIKTAF (261 aa)) form the Protein kinase domain. ATP-binding positions include 17–25 (IGGGGMANV) and Lys40. Asp134 acts as the Proton acceptor in catalysis. 4 positions are modified to phosphothreonine; by autocatalysis: Thr162, Thr163, Thr165, and Thr167. At Ser214 the chain carries Phosphoserine; by autocatalysis. 3 positions are modified to phosphothreonine; by autocatalysis: Thr290, Thr313, and Thr320. A helical membrane pass occupies residues 331-351 (WVLLTICLVFITAGILAVTVF). At 352-648 (PSLFMPKDVK…YKTIEYPKDE (297 aa)) the chain is on the extracellular side. PASTA domains lie at 356–424 (MPKD…YKST), 425–492 (GKAK…TVSI), and 493–559 (GPED…TFSL).

The protein belongs to the protein kinase superfamily. Ser/Thr protein kinase family. In terms of assembly, homodimer. In terms of processing, autophosphorylation on threonine residue(s) and serine residue considerably increases the kinase activity of the protein. Dephosphorylated in vitro by PrpC.

It localises to the spore membrane. The catalysed reaction is L-seryl-[protein] + ATP = O-phospho-L-seryl-[protein] + ADP + H(+). It carries out the reaction L-threonyl-[protein] + ATP = O-phospho-L-threonyl-[protein] + ADP + H(+). With respect to regulation, bryostatin activates PrkC activity and induces germination, whereas staurosporine inhibits PrkC and significantly reduced peptidoglycan-dependent germination. Kinase activity of isolated N-terminus stimulated by poly-L-lysine or myelin basic protein. Protein kinase that is responsible for triggering spore germination in response to muropeptides, signaling bacteria to exit dormancy. PrkC is thus a germination receptor that binds peptidoglycan fragments containing m-Dpm (meso-diaminopimelate), which act as spore germinants. Autophosphorylates and phosphorylates EF-G (elongation factor G, fusA); the latter modification is likely necessary for germination in response to peptidoglycan. Another group did not detect phosphorylation of EF-G. PrkC is a substrate in vitro of the cotranscribed phosphatase PrpC, which suggests that they form a functional couple in vivo. Might also be involved in sporulation and biofilm formation. Does not seem to be involved in stress response. The chain is Serine/threonine-protein kinase PrkC (prkC) from Bacillus subtilis (strain 168).